The primary structure comprises 366 residues: Neutral protease 2 homolog MGYG_04094 (366 aa).

An N-terminal signal peptide occupies residues 1 to 19; that stretch reads MQILAALSAIGALVATATA. Residues 20–188 constitute a propeptide that is removed on maturation; sequence AAVPNAPAKQ…NKSRSTIDKR (169 aa). Cystine bridges form between Cys196–Cys267 and Cys274–Cys292. His317 lines the Zn(2+) pocket. Residue Glu318 is part of the active site. Residues His321 and Asp332 each coordinate Zn(2+).

This sequence belongs to the peptidase M35 family. The cofactor is Zn(2+).

The protein localises to the secreted. It carries out the reaction Preferential cleavage of bonds with hydrophobic residues in P1'. Also 3-Asn-|-Gln-4 and 8-Gly-|-Ser-9 bonds in insulin B chain.. Functionally, secreted metalloproteinase that allows assimilation of proteinaceous substrates. Shows high activities on basic nuclear substrates such as histone and protamine. May be involved in virulence. The sequence is that of Neutral protease 2 homolog MGYG_04094 from Arthroderma gypseum (strain ATCC MYA-4604 / CBS 118893) (Microsporum gypseum).